A 141-amino-acid polypeptide reads, in one-letter code: Large ribosomal subunit protein uL11 (141 aa).

Belongs to the universal ribosomal protein uL11 family. As to quaternary structure, part of the ribosomal stalk of the 50S ribosomal subunit. Interacts with L10 and the large rRNA to form the base of the stalk. L10 forms an elongated spine to which L12 dimers bind in a sequential fashion forming a multimeric L10(L12)X complex. In terms of processing, one or more lysine residues are methylated.

In terms of biological role, forms part of the ribosomal stalk which helps the ribosome interact with GTP-bound translation factors. This is Large ribosomal subunit protein uL11 from Lactococcus lactis subsp. cremoris (strain MG1363).